A 1176-amino-acid polypeptide reads, in one-letter code: Pesticidal crystal protein Cry1Ag (1176 aa).

The protein belongs to the delta endotoxin family.

Promotes colloidosmotic lysis by binding to the midgut epithelial cells of many lepidopteran larvae. This is Pesticidal crystal protein Cry1Ag (cry1Ag) from Bacillus thuringiensis.